A 299-amino-acid chain; its full sequence is Probable lipid kinase YegS (299 aa).

The DAGKc domain occupies 2 to 133 (AEFPASLLIL…IDMAQVNKQT (132 aa)). ATP contacts are provided by residues T40, 66 to 72 (GDGTINE), and T95. 3 residues coordinate Mg(2+): L215, D218, and L220. E271 (proton acceptor) is an active-site residue.

It belongs to the diacylglycerol/lipid kinase family. YegS lipid kinase subfamily. It depends on Mg(2+) as a cofactor. Ca(2+) is required as a cofactor.

Its subcellular location is the cytoplasm. In terms of biological role, probably phosphorylates lipids; the in vivo substrate is unknown. This Escherichia coli O17:K52:H18 (strain UMN026 / ExPEC) protein is Probable lipid kinase YegS.